The chain runs to 505 residues: 2,3-bisphosphoglycerate-independent phosphoglycerate mutase (505 aa).

Residues aspartate 11 and serine 61 each contribute to the Mn(2+) site. The Phosphoserine intermediate role is filled by serine 61. Residues histidine 122, 152-153 (RD), arginine 184, arginine 190, 258-261 (RPDR), and lysine 331 contribute to the substrate site. 5 residues coordinate Mn(2+): aspartate 396, histidine 400, aspartate 437, histidine 438, and histidine 455.

This sequence belongs to the BPG-independent phosphoglycerate mutase family. In terms of assembly, monomer. Mn(2+) is required as a cofactor.

The enzyme catalyses (2R)-2-phosphoglycerate = (2R)-3-phosphoglycerate. It participates in carbohydrate degradation; glycolysis; pyruvate from D-glyceraldehyde 3-phosphate: step 3/5. Its function is as follows. Catalyzes the interconversion of 2-phosphoglycerate and 3-phosphoglycerate. This Mesomycoplasma hyopneumoniae (strain J / ATCC 25934 / NCTC 10110) (Mycoplasma hyopneumoniae) protein is 2,3-bisphosphoglycerate-independent phosphoglycerate mutase.